We begin with the raw amino-acid sequence, 395 residues long: Probable inactive serine/threonine-protein kinase DDB_G0293746 (395 aa).

The 387-residue stretch at 9 to 395 folds into the Protein kinase domain; that stretch reads YSEIDLISDN…ITQFIIDYLF (387 aa). Residues 15–23 and K54 contribute to the ATP site; that span reads ISDNPFKNY. Residues 213–266 form a disordered region; it reads NSSLSSLSSSTSSSSSSSSSTNCNNNTTENNNNNYNNNNNNNNNNNNNNNNNSL.

This sequence belongs to the protein kinase superfamily. Ser/Thr protein kinase family.

The sequence is that of Probable inactive serine/threonine-protein kinase DDB_G0293746 from Dictyostelium discoideum (Social amoeba).